Here is a 110-residue protein sequence, read N- to C-terminus: Thiosulfate sulfurtransferase GlpE (110 aa).

Residues 17–105 enclose the Rhodanese domain; that stretch reads RENGAQVVDI…WRSVYPADTS (89 aa). C65 acts as the Cysteine persulfide intermediate in catalysis.

This sequence belongs to the GlpE family.

The protein resides in the cytoplasm. It catalyses the reaction thiosulfate + hydrogen cyanide = thiocyanate + sulfite + 2 H(+). It carries out the reaction thiosulfate + [thioredoxin]-dithiol = [thioredoxin]-disulfide + hydrogen sulfide + sulfite + 2 H(+). Its function is as follows. Transferase that catalyzes the transfer of sulfur from thiosulfate to thiophilic acceptors such as cyanide or dithiols. May function in a CysM-independent thiosulfate assimilation pathway by catalyzing the conversion of thiosulfate to sulfite, which can then be used for L-cysteine biosynthesis. The chain is Thiosulfate sulfurtransferase GlpE from Pseudomonas aeruginosa (strain LESB58).